The following is a 767-amino-acid chain: Cation/H(+) antiporter 27 (767 aa).

A run of 11 helical transmembrane segments spans residues 39–59, 63–83, 99–119, 135–155, 173–193, 205–225, 242–262, 280–300, 323–343, 371–391, and 415–435; these read LPLLLLQISVFSIFSVSFQFL, FGKFAFLTQMLAGICLGPSVI, VYIIESFEAICFLFICYITTC, INGILLFLIPFVWGQFAAILI, HVAIVQSTMFFQVVYGVLSSL, LASMMVHDCLSWCFFMLNIAI, VLQMIMILVIAYVFRPLMLWM, ICVLLFISCLWAEFVGLPYFF, IGCFVWSVLMPCYVIGIGLNI, IALPSLYYKVPLWHAILVGFI, and KSFGAMVMSATVNSTIFIVIV.

The protein belongs to the monovalent cation:proton antiporter 2 (CPA2) transporter (TC 2.A.37) family. CHX (TC 2.A.37.4) subfamily. In terms of tissue distribution, specifically expressed in pollen.

It is found in the membrane. Functionally, may operate as a cation/H(+) antiporter. In Arabidopsis thaliana (Mouse-ear cress), this protein is Cation/H(+) antiporter 27 (CHX27).